The chain runs to 347 residues: Quinolinate synthase (347 aa).

2 residues coordinate iminosuccinate: His-47 and Ser-68. Cys-113 serves as a coordination point for [4Fe-4S] cluster. Iminosuccinate is bound by residues Tyr-139–Asn-141 and Ser-156. Cys-200 contacts [4Fe-4S] cluster. Iminosuccinate-binding positions include His-226–Glu-228 and Thr-243. Position 297 (Cys-297) interacts with [4Fe-4S] cluster.

This sequence belongs to the quinolinate synthase family. Type 1 subfamily. Requires [4Fe-4S] cluster as cofactor.

The protein localises to the cytoplasm. The catalysed reaction is iminosuccinate + dihydroxyacetone phosphate = quinolinate + phosphate + 2 H2O + H(+). The protein operates within cofactor biosynthesis; NAD(+) biosynthesis; quinolinate from iminoaspartate: step 1/1. Functionally, catalyzes the condensation of iminoaspartate with dihydroxyacetone phosphate to form quinolinate. The chain is Quinolinate synthase from Escherichia coli O127:H6 (strain E2348/69 / EPEC).